We begin with the raw amino-acid sequence, 518 residues long: MSTNPHVFSLDVRYHEDASALFAHLGGTTADDAALLESADITTKNGISSLAVLKSSVRITCTGNTVVTQPLTDSGRAVVARLTQQLGQYNTAENTFSFPASDAVDERERLTAPSTIEVLRKLQFESGYSDASLPLLMGGFAFDFLETFETLPAVEESVNTYPDYQFVLAEIVLDINHQDQTAKLAGVSNAPGELEAELNKLSLLIDAALPATEHAYQTTPHDGDTLRVVADIPDAQFRTQINELKENIYNGDIYQVVPARTFTAPCPDAFAAYLQLRATNPSPYMFYIRGLNEGRSYELFGASPESNLKFTAANRELQLYPIAGTRPRGLNPDGSINDELDIRNELDMRTDAKEIAEHTMLVDLARNDLARVSVPASRRVADLLQVDRYSRVMHLVSRVTATLDPELDALDAYRACMNMGTLTGAPKLRAMELLRGVEKRRRGSYGGAVGYLRGNGDMDNCIVIRSAFVQDGVAAVQAGAGVVRDSNPQSEADETLHKAYAVLNAIALAAGSTLEVIR.

L-tryptophan is bound by residues S38 and 283-285 (PYM). Chorismate is bound at residue 324–325 (GT). Residue E357 participates in Mg(2+) binding. Chorismate-binding positions include Y445, R465, 479–481 (GAG), and G481. E494 lines the Mg(2+) pocket.

This sequence belongs to the anthranilate synthase component I family. Heterotetramer consisting of two non-identical subunits: a beta subunit (TrpG) and a large alpha subunit (TrpE). Mg(2+) is required as a cofactor.

It catalyses the reaction chorismate + L-glutamine = anthranilate + pyruvate + L-glutamate + H(+). The protein operates within amino-acid biosynthesis; L-tryptophan biosynthesis; L-tryptophan from chorismate: step 1/5. Its activity is regulated as follows. Feedback inhibited by tryptophan. Its function is as follows. Part of a heterotetrameric complex that catalyzes the two-step biosynthesis of anthranilate, an intermediate in the biosynthesis of L-tryptophan. In the first step, the glutamine-binding beta subunit (TrpG) of anthranilate synthase (AS) provides the glutamine amidotransferase activity which generates ammonia as a substrate that, along with chorismate, is used in the second step, catalyzed by the large alpha subunit of AS (TrpE) to produce anthranilate. In the absence of TrpG, TrpE can synthesize anthranilate directly from chorismate and high concentrations of ammonia. In Corynebacterium glutamicum (strain ATCC 13032 / DSM 20300 / JCM 1318 / BCRC 11384 / CCUG 27702 / LMG 3730 / NBRC 12168 / NCIMB 10025 / NRRL B-2784 / 534), this protein is Anthranilate synthase component 1 (trpE).